We begin with the raw amino-acid sequence, 412 residues long: Flap endonuclease 1-B (412 aa).

The tract at residues 1-105 is N-domain; that stretch reads MGIKGLTKLL…KELAKRSLKR (105 aa). Asp-34 contacts Mg(2+). Position 71 (Arg-71) interacts with DNA. Mg(2+) contacts are provided by Asp-87, Glu-159, Glu-161, Asp-180, and Asp-182. Residues 123–254 form an I-domain region; that stretch reads LIEKFSKRTV…QRALKLIRQH (132 aa). Position 159 (Glu-159) interacts with DNA. Residues Gly-232 and Asp-234 each coordinate DNA. Residue Asp-234 participates in Mg(2+) binding.

It belongs to the XPG/RAD2 endonuclease family. FEN1 subfamily. As to quaternary structure, interacts with PCNA. Three molecules of FEN1 bind to one PCNA trimer with each molecule binding to one PCNA monomer. PCNA stimulates the nuclease activity without altering cleavage specificity. Mg(2+) serves as cofactor. Phosphorylated. Phosphorylation upon DNA damage induces relocalization to the nuclear plasma.

It is found in the nucleus. Its subcellular location is the nucleolus. The protein localises to the nucleoplasm. The protein resides in the mitochondrion. Structure-specific nuclease with 5'-flap endonuclease and 5'-3' exonuclease activities involved in DNA replication and repair. During DNA replication, cleaves the 5'-overhanging flap structure that is generated by displacement synthesis when DNA polymerase encounters the 5'-end of a downstream Okazaki fragment. It enters the flap from the 5'-end and then tracks to cleave the flap base, leaving a nick for ligation. Also involved in the long patch base excision repair (LP-BER) pathway, by cleaving within the apurinic/apyrimidinic (AP) site-terminated flap. Acts as a genome stabilization factor that prevents flaps from equilibrating into structures that lead to duplications and deletions. Also possesses 5'-3' exonuclease activity on nicked or gapped double-stranded DNA, and exhibits RNase H activity. Also involved in replication and repair of rDNA and in repairing mitochondrial DNA. In Oryza sativa subsp. indica (Rice), this protein is Flap endonuclease 1-B.